A 383-amino-acid polypeptide reads, in one-letter code: Succinyl-diaminopimelate desuccinylase (383 aa).

Position 79 (histidine 79) interacts with Zn(2+). Residue aspartate 81 is part of the active site. Aspartate 110 contributes to the Zn(2+) binding site. The active-site Proton acceptor is the glutamate 141. Zn(2+) contacts are provided by glutamate 142, glutamate 170, and histidine 355.

The protein belongs to the peptidase M20A family. DapE subfamily. In terms of assembly, homodimer. The cofactor is Zn(2+). Co(2+) is required as a cofactor.

The catalysed reaction is N-succinyl-(2S,6S)-2,6-diaminopimelate + H2O = (2S,6S)-2,6-diaminopimelate + succinate. It participates in amino-acid biosynthesis; L-lysine biosynthesis via DAP pathway; LL-2,6-diaminopimelate from (S)-tetrahydrodipicolinate (succinylase route): step 3/3. Its function is as follows. Catalyzes the hydrolysis of N-succinyl-L,L-diaminopimelic acid (SDAP), forming succinate and LL-2,6-diaminopimelate (DAP), an intermediate involved in the bacterial biosynthesis of lysine and meso-diaminopimelic acid, an essential component of bacterial cell walls. The polypeptide is Succinyl-diaminopimelate desuccinylase (Helicobacter pylori (strain HPAG1)).